A 698-amino-acid polypeptide reads, in one-letter code: Elongation factor G (698 aa).

The tr-type G domain occupies 11–291; the sequence is THFRNIGIAA…AVVDYLPSPL (281 aa). GTP contacts are provided by residues 20–27, 90–94, and 144–147; these read AHIDAGKT, DTPGH, and NKMD.

It belongs to the TRAFAC class translation factor GTPase superfamily. Classic translation factor GTPase family. EF-G/EF-2 subfamily.

The protein resides in the cytoplasm. In terms of biological role, catalyzes the GTP-dependent ribosomal translocation step during translation elongation. During this step, the ribosome changes from the pre-translocational (PRE) to the post-translocational (POST) state as the newly formed A-site-bound peptidyl-tRNA and P-site-bound deacylated tRNA move to the P and E sites, respectively. Catalyzes the coordinated movement of the two tRNA molecules, the mRNA and conformational changes in the ribosome. The sequence is that of Elongation factor G from Deinococcus radiodurans (strain ATCC 13939 / DSM 20539 / JCM 16871 / CCUG 27074 / LMG 4051 / NBRC 15346 / NCIMB 9279 / VKM B-1422 / R1).